The sequence spans 314 residues: DNA-directed RNA polymerase subunit alpha (314 aa).

The tract at residues methionine 1–threonine 228 is alpha N-terminal domain (alpha-NTD). Residues lysine 245–aspartate 314 are alpha C-terminal domain (alpha-CTD).

Belongs to the RNA polymerase alpha chain family. In terms of assembly, homodimer. The RNAP catalytic core consists of 2 alpha, 1 beta, 1 beta' and 1 omega subunit. When a sigma factor is associated with the core the holoenzyme is formed, which can initiate transcription.

It carries out the reaction RNA(n) + a ribonucleoside 5'-triphosphate = RNA(n+1) + diphosphate. Its function is as follows. DNA-dependent RNA polymerase catalyzes the transcription of DNA into RNA using the four ribonucleoside triphosphates as substrates. The chain is DNA-directed RNA polymerase subunit alpha from Geobacillus kaustophilus (strain HTA426).